Here is a 528-residue protein sequence, read N- to C-terminus: Benzoylformate decarboxylase (528 aa).

The Mg(2+) site is built by N117, L118, and R120. A thiamine pyrophosphate binding region spans residues 377-460 (TSTTAQMWQR…VIMNNGTYGA (84 aa)). D428, N455, and T457 together coordinate Ca(2+).

It belongs to the TPP enzyme family. Homotetramer. Requires Ca(2+) as cofactor. Thiamine diphosphate serves as cofactor. The cofactor is Mg(2+).

It catalyses the reaction phenylglyoxylate + H(+) = benzaldehyde + CO2. It functions in the pathway aromatic compound metabolism; (R)-mandelate degradation; benzoate from (R)-mandelate: step 3/4. This is Benzoylformate decarboxylase (mdlC) from Pseudomonas putida (Arthrobacter siderocapsulatus).